A 1035-amino-acid chain; its full sequence is Retinoblastoma-related protein (1035 aa).

The disordered stretch occupies residues 403–426; the sequence is ITSPLSPHRSPASHANGIPGSANS. Residues 431-632 are domain A; that stretch reads TPVSTAMTTA…EKGSSLYNSL (202 aa). The tract at residues 431–885 is pocket; the sequence is TPVSTAMTTA…NEIFIPAAKP (455 aa). Positions 633 to 753 are spacer; the sequence is TVARPALSAE…PGGGGETCAE (121 aa). Disordered regions lie at residues 674-697 and 721-748; these read PSLQ…PKRP and GNLK…GGGG. The domain B stretch occupies residues 754-885; that stretch reads TGINVFFTKI…NEIFIPAAKP (132 aa).

This sequence belongs to the retinoblastoma protein (RB) family.

It localises to the nucleus. Functionally, regulator of biological processes that recruits a histone deacetylase to control gene transcription. May play a role in the entry into mitosis, negatively regulating the cell proliferation. Formation of stable complexes with geminiviridae replication-associated proteins may create a cellular environment which favors viral DNA replication. The protein is Retinoblastoma-related protein (RBL901) of Populus trichocarpa (Western balsam poplar).